A 204-amino-acid chain; its full sequence is Somatotropin (204 aa).

Residues 1-17 form the signal peptide; it reads MDRVLLLLSVLTLGVSS. Glutamine 18 carries the pyrrolidone carboxylic acid modification. Histidine 36 is a binding site for Zn(2+). Residues cysteine 69 and cysteine 177 are joined by a disulfide bond. Glutamate 186 is a binding site for Zn(2+). Cysteine 194 and cysteine 202 form a disulfide bridge.

The protein belongs to the somatotropin/prolactin family.

Its subcellular location is the secreted. In terms of biological role, growth hormone plays an important role in growth control and is involved in the regulation of several anabolic processes. Implicated as an osmoregulatory substance important for seawater adaptation. In Larimichthys crocea (Large yellow croaker), this protein is Somatotropin (gh).